The following is a 762-amino-acid chain: 5-methyltetrahydropteroyltriglutamate--homocysteine methyltransferase (762 aa).

Residues 17-20 (REWK) and Lys111 contribute to the 5-methyltetrahydropteroyltri-L-glutamate site. L-homocysteine contacts are provided by residues 435–437 (IGS) and Glu488. L-methionine contacts are provided by residues 435–437 (IGS) and Glu488. 5-methyltetrahydropteroyltri-L-glutamate-binding positions include 519 to 520 (RC) and Trp565. Residue Asp603 coordinates L-homocysteine. Asp603 provides a ligand contact to L-methionine. Glu609 is a 5-methyltetrahydropteroyltri-L-glutamate binding site. Zn(2+)-binding residues include His645, Cys647, and Glu669. His698 serves as the catalytic Proton donor. Cys730 is a binding site for Zn(2+).

It belongs to the vitamin-B12 independent methionine synthase family. Zn(2+) serves as cofactor.

The catalysed reaction is 5-methyltetrahydropteroyltri-L-glutamate + L-homocysteine = tetrahydropteroyltri-L-glutamate + L-methionine. It functions in the pathway amino-acid biosynthesis; L-methionine biosynthesis via de novo pathway; L-methionine from L-homocysteine (MetE route): step 1/1. Catalyzes the transfer of a methyl group from 5-methyltetrahydrofolate to homocysteine resulting in methionine formation. This Bacillus mycoides (strain KBAB4) (Bacillus weihenstephanensis) protein is 5-methyltetrahydropteroyltriglutamate--homocysteine methyltransferase.